Consider the following 159-residue polypeptide: Nucleotide-binding protein PSPA7_4966 (159 aa).

It belongs to the YajQ family.

In terms of biological role, nucleotide-binding protein. The protein is Nucleotide-binding protein PSPA7_4966 of Pseudomonas paraeruginosa (strain DSM 24068 / PA7) (Pseudomonas aeruginosa (strain PA7)).